Reading from the N-terminus, the 134-residue chain is MFRTAALTAARVARPAVASAVRAGVARPAFVQAVPKVAAFQAVRFYSAGGHLKKDEVFSRIAQVLSGFDKVNDPKNITETAHFANDLGLDSLDTVEVVMAIEEEFSIEIPDKDADQIHSVDKAVEYILSQPDAN.

Residues 1 to 46 constitute a mitochondrion transit peptide; sequence MFRTAALTAARVARPAVASAVRAGVARPAFVQAVPKVAAFQAVRFY. The Carrier domain occupies 55 to 131; that stretch reads DEVFSRIAQV…KAVEYILSQP (77 aa). Serine 91 bears the O-(pantetheine 4'-phosphoryl)serine mark.

It belongs to the acyl carrier protein (ACP) family. As to quaternary structure, complex I is composed of about 30 different subunits. 4'-phosphopantetheine is transferred from CoA to a specific serine of apo-ACP by acpS. This modification is essential for activity because fatty acids are bound in thioester linkage to the sulfhydryl of the prosthetic group.

The protein localises to the mitochondrion. It functions in the pathway lipid metabolism; fatty acid biosynthesis. Functionally, carrier of the growing fatty acid chain in fatty acid biosynthesis. May be involved in the synthesis of very-long-chain fatty acids. Accessory and non-catalytic subunit of the mitochondrial membrane respiratory chain NADH dehydrogenase (Complex I), which functions in the transfer of electrons from NADH to the respiratory chain. This Neurospora crassa (strain ATCC 24698 / 74-OR23-1A / CBS 708.71 / DSM 1257 / FGSC 987) protein is Acyl carrier protein, mitochondrial (nuo-12).